Reading from the N-terminus, the 182-residue chain is Epoxyqueuosine reductase QueH (182 aa).

4 residues coordinate [4Fe-4S] cluster: Cys-10, Cys-11, Cys-85, and Cys-88. A disulfide bridge connects residues Cys-165 and Cys-167.

It belongs to the QueH family.

It carries out the reaction epoxyqueuosine(34) in tRNA + AH2 = queuosine(34) in tRNA + A + H2O. The protein operates within tRNA modification; tRNA-queuosine biosynthesis. In terms of biological role, catalyzes the conversion of epoxyqueuosine (oQ) to queuosine (Q), which is a hypermodified base found in the wobble positions of tRNA(Asp), tRNA(Asn), tRNA(His) and tRNA(Tyr). This chain is Epoxyqueuosine reductase QueH, found in Dehalococcoides mccartyi (strain ATCC BAA-2266 / KCTC 15142 / 195) (Dehalococcoides ethenogenes (strain 195)).